We begin with the raw amino-acid sequence, 246 residues long: Endonuclease NucS (246 aa).

It belongs to the NucS endonuclease family.

It localises to the cytoplasm. Functionally, cleaves both 3' and 5' ssDNA extremities of branched DNA structures. This Corynebacterium urealyticum (strain ATCC 43042 / DSM 7109) protein is Endonuclease NucS.